Reading from the N-terminus, the 512-residue chain is MLFRISMSATEFLLASLIFCLVFWVIRASRPRVPKGLKNPPGPWGWPLIGHILTLGKNPHLALSRMSQRYGDVLQIRIGSTPVLVLSGLDTIRQALVQQGDDFKGRPNLYSFTLISNGQSMSFGPDSGPVWAARRRLAQNGLKSFSIASDPASSSSCYLEEHVSKEAEVLISKLQEQMAGPGHFNPYRYVVISVANVICAICFGQRYDHNHQELLSLVNLSNNFGEVVGSGNPADFIPILRYLPNRSLNGFKDLNEKFHSFMQKMIKEHYKTFEKGYIRDITDSLIEHCQEKQLDENANIQLSDEKIVNVVLDLFGAGFDTVTTAISWSLMYLVTNPRVQRKIQEELDTVIGRSRRPRLSDRSHLPYMEAFILETFRHSSFVPFTIPHSTTRDTSLKGFYIPKGRCVFVNQWQINHDQKLWVNPSEFLPERFITPDGAIDKVLSEKVILFGLGKRKCIGETIARWEVFLFLAILLQRVEFSVPPGVKVDMTPIYGLTMKHACCEHFQMQLRS.

Residues 29–40 are mitochondrial targeting signal; the sequence is SRPRVPKGLKNP. Ser-67 carries O-linked (GlcNAc) serine glycosylation. Position 224 (Phe-224) interacts with substrate. Cys-457 is a binding site for heme.

This sequence belongs to the cytochrome P450 family. As to quaternary structure, interacts with cytosolic chaperones HSP70 and HSP90; this interaction is required for initial targeting to mitochondria. Interacts (via mitochondrial targeting signal) with TOMM40 (via N-terminus); this interaction is required for translocation across the mitochondrial outer membrane. It depends on heme as a cofactor.

It is found in the endoplasmic reticulum membrane. The protein resides in the mitochondrion inner membrane. Its subcellular location is the microsome membrane. It localises to the cytoplasm. The catalysed reaction is an organic molecule + reduced [NADPH--hemoprotein reductase] + O2 = an alcohol + oxidized [NADPH--hemoprotein reductase] + H2O + H(+). The enzyme catalyses estrone + reduced [NADPH--hemoprotein reductase] + O2 = 2-hydroxyestrone + oxidized [NADPH--hemoprotein reductase] + H2O + H(+). It catalyses the reaction estrone + reduced [NADPH--hemoprotein reductase] + O2 = 4-hydroxyestrone + oxidized [NADPH--hemoprotein reductase] + H2O + H(+). It carries out the reaction estrone + reduced [NADPH--hemoprotein reductase] + O2 = 6alpha-hydroxyestrone + oxidized [NADPH--hemoprotein reductase] + H2O + H(+). The catalysed reaction is estrone + reduced [NADPH--hemoprotein reductase] + O2 = 15alpha-hydroxyestrone + oxidized [NADPH--hemoprotein reductase] + H2O + H(+). The enzyme catalyses estrone + reduced [NADPH--hemoprotein reductase] + O2 = 16alpha-hydroxyestrone + oxidized [NADPH--hemoprotein reductase] + H2O + H(+). It catalyses the reaction 17beta-estradiol + reduced [NADPH--hemoprotein reductase] + O2 = 2-hydroxy-17beta-estradiol + oxidized [NADPH--hemoprotein reductase] + H2O + H(+). It carries out the reaction 17beta-estradiol + reduced [NADPH--hemoprotein reductase] + O2 = 4-hydroxy-17beta-estradiol + oxidized [NADPH--hemoprotein reductase] + H2O + H(+). The catalysed reaction is 17beta-estradiol + reduced [NADPH--hemoprotein reductase] + O2 = 6alpha-hydroxy-17beta-estradiol + oxidized [NADPH--hemoprotein reductase] + H2O + H(+). The enzyme catalyses 17beta-estradiol + reduced [NADPH--hemoprotein reductase] + O2 = 7alpha-hydroxy-17beta-estradiol + oxidized [NADPH--hemoprotein reductase] + H2O + H(+). It catalyses the reaction 17beta-estradiol + reduced [NADPH--hemoprotein reductase] + O2 = 15alpha-hydroxy-17beta-estradiol + oxidized [NADPH--hemoprotein reductase] + H2O + H(+). It carries out the reaction (5Z,8Z,11Z)-eicosatrienoate + reduced [NADPH--hemoprotein reductase] + O2 = 19-hydroxy-(5Z,8Z,11Z)-eicosatrienoate + oxidized [NADPH--hemoprotein reductase] + H2O + H(+). The catalysed reaction is (5Z,8Z,11Z,14Z)-eicosatetraenoate + reduced [NADPH--hemoprotein reductase] + O2 = 16-hydroxy-(5Z,8Z,11Z,14Z)-eicosatetraenoate + oxidized [NADPH--hemoprotein reductase] + H2O + H(+). The enzyme catalyses (5Z,8Z,11Z,14Z)-eicosatetraenoate + reduced [NADPH--hemoprotein reductase] + O2 = 17-hydroxy-(5Z,8Z,11Z,14Z)-eicosatetraenoate + oxidized [NADPH--hemoprotein reductase] + H2O + H(+). It catalyses the reaction (5Z,8Z,11Z,14Z)-eicosatetraenoate + reduced [NADPH--hemoprotein reductase] + O2 = 18-hydroxy-(5Z,8Z,11Z,14Z)-eicosatetraenoate + oxidized [NADPH--hemoprotein reductase] + H2O + H(+). It carries out the reaction (5Z,8Z,11Z,14Z)-eicosatetraenoate + reduced [NADPH--hemoprotein reductase] + O2 = 19-hydroxy-(5Z,8Z,11Z,14Z)-eicosatetraenoate + oxidized [NADPH--hemoprotein reductase] + H2O + H(+). The catalysed reaction is (5Z,8Z,11Z,14Z,17Z)-eicosapentaenoate + reduced [NADPH--hemoprotein reductase] + O2 = 19-hydroxy-(5Z,8Z,11Z,14Z,17Z)-eicosapentaenoate + oxidized [NADPH--hemoprotein reductase] + H2O + H(+). The enzyme catalyses (5Z,8Z,11Z,14Z)-eicosatetraenoate + reduced [NADPH--hemoprotein reductase] + O2 = (8R,9S)-epoxy-(5Z,11Z,14Z)-eicosatrienoate + oxidized [NADPH--hemoprotein reductase] + H2O + H(+). It catalyses the reaction (5Z,8Z,11Z,14Z)-eicosatetraenoate + reduced [NADPH--hemoprotein reductase] + O2 = (11R,12S)-epoxy-(5Z,8Z,14Z)-eicosatrienoate + oxidized [NADPH--hemoprotein reductase] + H2O + H(+). It carries out the reaction (5Z,8Z,11Z,14Z)-eicosatetraenoate + reduced [NADPH--hemoprotein reductase] + O2 = (14S,15R)-epoxy-(5Z,8Z,11Z)-eicosatrienoate + oxidized [NADPH--hemoprotein reductase] + H2O + H(+). The catalysed reaction is (5Z,8Z,11Z,14Z)-eicosatetraenoate + reduced [NADPH--hemoprotein reductase] + O2 = (14R,15S)-epoxy-(5Z,8Z,11Z)-eicosatrienoate + oxidized [NADPH--hemoprotein reductase] + H2O + H(+). The enzyme catalyses (5Z,8Z,11Z,14Z,17Z)-eicosapentaenoate + reduced [NADPH--hemoprotein reductase] + O2 = (17R,18S)-epoxy-(5Z,8Z,11Z,14Z)-eicosatetraenoate + oxidized [NADPH--hemoprotein reductase] + H2O + H(+). It catalyses the reaction (4Z,7Z,10Z,13Z,16Z,19Z)-docosahexaenoate + reduced [NADPH--hemoprotein reductase] + O2 = (19S,20R)-epoxy-(4Z,7Z,10Z,13Z,16Z)-docosapentaenoate + oxidized [NADPH--hemoprotein reductase] + H2O + H(+). It carries out the reaction (4Z,7Z,10Z,13Z,16Z,19Z)-docosahexaenoate + reduced [NADPH--hemoprotein reductase] + O2 = (19R,20S)-epoxy-(4Z,7Z,10Z,13Z,16Z)-docosapentaenoate + oxidized [NADPH--hemoprotein reductase] + H2O + H(+). The catalysed reaction is all-trans-retinol + reduced [NADPH--hemoprotein reductase] + O2 = all-trans-retinal + oxidized [NADPH--hemoprotein reductase] + 2 H2O + H(+). The enzyme catalyses all-trans-retinal + reduced [NADPH--hemoprotein reductase] + O2 = all-trans-retinoate + oxidized [NADPH--hemoprotein reductase] + H2O + 2 H(+). It catalyses the reaction (13S)-hydroperoxy-(9Z,11E)-octadecadienoate = 13-oxo-(9Z,11E)-octadecadienoate + H2O. It carries out the reaction (12S)-hydroperoxy-(5Z,8Z,10E,14Z)-eicosatetraenoate = 12-oxo-(5Z,8Z,10E,14Z)-eicosatetraenoate + H2O. The catalysed reaction is (15S)-hydroperoxy-(5Z,8Z,11Z,13E)-eicosatetraenoate = 15-oxo-(5Z,8Z,11Z,13E)-eicosatetraenoate + H2O. The enzyme catalyses (5S)-hydroperoxy-(6E,8Z,11Z,14Z)-eicosatetraenoate = 5-oxo-(6E,8Z,11Z,14Z)-eicosatetraenoate + H2O. It functions in the pathway steroid hormone biosynthesis. Its pathway is lipid metabolism; fatty acid metabolism. The protein operates within cofactor metabolism; retinol metabolism. Functionally, a cytochrome P450 monooxygenase involved in the metabolism of various endogenous substrates, including fatty acids, steroid hormones and vitamins. Mechanistically, uses molecular oxygen inserting one oxygen atom into a substrate, and reducing the second into a water molecule, with two electrons provided by NADPH via cytochrome P450 reductase (CPR; NADPH-ferrihemoprotein reductase). Catalyzes the hydroxylation of carbon-hydrogen bonds. Exhibits high catalytic activity for the formation of hydroxyestrogens from estrone (E1) and 17beta-estradiol (E2), namely 2-hydroxy E1 and E2, as well as D-ring hydroxylated E1 and E2 at the C15alpha and C16alpha positions. Displays different regioselectivities for polyunsaturated fatty acids (PUFA) hydroxylation. Catalyzes the epoxidation of double bonds of certain PUFA. Converts arachidonic acid toward epoxyeicosatrienoic acid (EET) regioisomers, 8,9-, 11,12-, and 14,15-EET, that function as lipid mediators in the vascular system. Displays an absolute stereoselectivity in the epoxidation of eicosapentaenoic acid (EPA) producing the 17(R),18(S) enantiomer. May play an important role in all-trans retinoic acid biosynthesis in extrahepatic tissues. Catalyzes two successive oxidative transformation of all-trans retinol to all-trans retinal and then to the active form all-trans retinoic acid. May also participate in eicosanoids metabolism by converting hydroperoxide species into oxo metabolites (lipoxygenase-like reaction, NADPH-independent). This chain is Cytochrome P450 1A1 (CYP1A1), found in Macaca fascicularis (Crab-eating macaque).